The chain runs to 256 residues: UPF0246 protein Swoo_1284 (256 aa).

This sequence belongs to the UPF0246 family.

This is UPF0246 protein Swoo_1284 from Shewanella woodyi (strain ATCC 51908 / MS32).